The chain runs to 130 residues: WAP four-disulfide core domain protein 3 (130 aa).

The N-terminal stretch at 1–16 (MKALLALGFLASWVAA) is a signal peptide. WAP domains follow at residues 17–61 (GEHA…RGDI) and 62–106 (EGGR…IPGL). Disulfide bonds link Cys25/Cys49, Cys32/Cys53, Cys36/Cys48, Cys42/Cys57, Cys69/Cys94, Cys77/Cys98, Cys81/Cys93, and Cys87/Cys102. Asn116 carries an N-linked (GlcNAc...) asparagine glycan.

It is found in the secreted. This Mus musculus (Mouse) protein is WAP four-disulfide core domain protein 3 (Wfdc3).